The sequence spans 21 residues: Tricyclic peptide MS-271 (21 aa).

Positions cysteine 1–aspartate 9 form a cross-link, 3-cysteinyl-aspartic acid (Cys-Asp). Cystine bridges form between cysteine 1–cysteine 13 and cysteine 7–cysteine 19. Tryptophan 21 carries the D-tryptophan modification.

In terms of biological role, inhibits chicken myosin light chain kinase with an IC(50) of 8 M. Does not inhibit bovine cAMP-dependent protein kinase or rat protein kinase C. Antibacterial activity against the Gram-positive bacteria B.subtilis, E.faecium and S.aureus. No antibacterial activity against the Gram-negative bacteria E.coli, K.pneumoniae, P.aeruginosa, P.vulgaris, S.sonnei and S.typhosa. No antifungal activity against C.albicans. The polypeptide is Tricyclic peptide MS-271 (Streptomyces sp).